Consider the following 270-residue polypeptide: 2-aminoethanethiol dioxygenase (270 aa).

The interval 21-48 is disordered; that stretch reads FRGSGGGRGASDRDAASGPEAPMQPGFP. The Fe cation site is built by H112 and H114. The interval 140–164 is disordered; the sequence is GGQRPRALPPEQQFEPPLQPREREA. H193 is a Fe cation binding site. Positions 220–223 form a cross-link, 3'-(S-cysteinyl)-tyrosine (Cys-Tyr); the sequence is CHYY.

In terms of assembly, monomer. Requires Fe cation as cofactor.

It catalyses the reaction cysteamine + O2 = hypotaurine + H(+). The catalysed reaction is N-terminal L-cysteinyl-[protein] + O2 = N-terminal S-hydroxy-S-oxy-L-cysteinyl-[protein] + H(+). In terms of biological role, plays a vital role in regulating thiol metabolism and preserving oxygen homeostasis by oxidizing the sulfur of cysteamine and N-terminal cysteine-containing proteins to their corresponding sulfinic acids using O2 as a cosubstrate. Catalyzes the oxidation of cysteamine (2-aminoethanethiol) to hypotaurine. Catalyzes the oxidation of regulators of G-protein signaling 4 (RGS4) and 5 (RGS5) and interleukin-32 (IL32). This is 2-aminoethanethiol dioxygenase (ADO) from Homo sapiens (Human).